Here is a 184-residue protein sequence, read N- to C-terminus: Orotate phosphoribosyltransferase (184 aa).

5-phospho-alpha-D-ribose 1-diphosphate contacts are provided by residues R99, K100, K103, H105, and 125-133 (EDTTTTGNS). Orotate contacts are provided by T129 and R157.

Belongs to the purine/pyrimidine phosphoribosyltransferase family. PyrE subfamily. In terms of assembly, homodimer. Requires Mg(2+) as cofactor.

It carries out the reaction orotidine 5'-phosphate + diphosphate = orotate + 5-phospho-alpha-D-ribose 1-diphosphate. It participates in pyrimidine metabolism; UMP biosynthesis via de novo pathway; UMP from orotate: step 1/2. Catalyzes the transfer of a ribosyl phosphate group from 5-phosphoribose 1-diphosphate to orotate, leading to the formation of orotidine monophosphate (OMP). This is Orotate phosphoribosyltransferase from Corynebacterium glutamicum (strain R).